The chain runs to 359 residues: Photosystem II protein D1 1 (359 aa).

A run of 3 helical transmembrane segments spans residues 29-46 (YVGW…AATT), 118-133 (HFLI…EWEL), and 142-156 (WICV…AASA). His-118 provides a ligand contact to chlorophyll a. Pheophytin a is bound at residue Tyr-126. Residues Asp-170 and Glu-189 each contribute to the [CaMn4O5] cluster site. A helical transmembrane segment spans residues 197 to 218 (FHMMGVAGVFGGSLFSAMHGSL). Position 198 (His-198) interacts with chlorophyll a. A quinone is bound by residues His-215 and 264 to 265 (SF). Residue His-215 participates in Fe cation binding. Fe cation is bound at residue His-272. The helical transmembrane segment at 274-288 (FLAAWPVVGIWFTAL) threads the bilayer. His-332, Glu-333, Asp-342, and Ala-344 together coordinate [CaMn4O5] cluster. Residues 345–359 (AAESTPVALQAPAIG) constitute a propeptide that is removed on maturation.

Belongs to the reaction center PufL/M/PsbA/D family. As to quaternary structure, PSII is composed of 1 copy each of membrane proteins PsbA, PsbB, PsbC, PsbD, PsbE, PsbF, PsbH, PsbI, PsbJ, PsbK, PsbL, PsbM, PsbT, PsbX, PsbY, PsbZ, Psb30/Ycf12, peripheral proteins PsbO, CyanoQ (PsbQ), PsbU, PsbV and a large number of cofactors. It forms dimeric complexes. Requires The D1/D2 heterodimer binds P680, chlorophylls that are the primary electron donor of PSII, and subsequent electron acceptors. It shares a non-heme iron and each subunit binds pheophytin, quinone, additional chlorophylls, carotenoids and lipids. D1 provides most of the ligands for the Mn4-Ca-O5 cluster of the oxygen-evolving complex (OEC). There is also a Cl(-1) ion associated with D1 and D2, which is required for oxygen evolution. The PSII complex binds additional chlorophylls, carotenoids and specific lipids. as cofactor. In terms of processing, tyr-161 forms a radical intermediate that is referred to as redox-active TyrZ, YZ or Y-Z. C-terminally processed by CtpA; processing is essential to allow assembly of the oxygen-evolving complex and thus photosynthetic growth.

It is found in the cellular thylakoid membrane. It carries out the reaction 2 a plastoquinone + 4 hnu + 2 H2O = 2 a plastoquinol + O2. In terms of biological role, photosystem II (PSII) is a light-driven water:plastoquinone oxidoreductase that uses light energy to abstract electrons from H(2)O, generating O(2) and a proton gradient subsequently used for ATP formation. It consists of a core antenna complex that captures photons, and an electron transfer chain that converts photonic excitation into a charge separation. The D1/D2 (PsbA/PsbD) reaction center heterodimer binds P680, the primary electron donor of PSII as well as several subsequent electron acceptors. This is Photosystem II protein D1 1 from Synechococcus sp. (strain WH7803).